A 258-amino-acid polypeptide reads, in one-letter code: F-box/SPRY domain-containing protein 1 (258 aa).

One can recognise an F-box domain in the interval 6-54; that stretch reads MEYAPNIPDNVLELIFSFLKLQDLRNCTLVCKSWYRFFCDENNEVWRAQ. The B30.2/SPRY domain maps to 64–256; that stretch reads FKNDLLTVVP…ISMVYLGAPL (193 aa).

It belongs to the FBXO45/Fsn family. Component of an E3 ubiquitin ligase complex composed of hiw and Fsn.

It is found in the synapse. It functions in the pathway protein modification; protein ubiquitination. In terms of biological role, required in the presynaptic motoneuron to down-regulate the levels of wnd and restrain synaptic terminal growth at the neuromuscular junction (NMJ). The protein is F-box/SPRY domain-containing protein 1 of Anopheles gambiae (African malaria mosquito).